The primary structure comprises 109 residues: Large ribosomal subunit protein P1 (109 aa).

The tract at residues 71-109 (APAAASSAPAKKEEPKKEEPKKEEPKEEETDMDMGDLFG) is disordered. A compositionally biased stretch (basic and acidic residues) spans 80 to 95 (AKKEEPKKEEPKKEEP). 3 consecutive repeat copies span residues 81 to 85 (KKEEP), 86 to 90 (KKEEP), and 91 to 95 (KKEEP). The tract at residues 81–95 (KKEEPKKEEPKKEEP) is 3 X 5 AA tandem repeats of K-K-E-E-P. The span at 96 to 109 (KEEETDMDMGDLFG) shows a compositional bias: acidic residues.

This sequence belongs to the eukaryotic ribosomal protein P1/P2 family. Not phosphorylated.

The polypeptide is Large ribosomal subunit protein P1 (RPLP1) (Tetrahymena thermophila).